Reading from the N-terminus, the 254-residue chain is Phosphatidylglycerol--prolipoprotein diacylglyceryl transferase (254 aa).

4 helical membrane-spanning segments follow: residues 11-31 (LAIR…LLLA), 49-69 (FLIA…IFEF), 84-104 (QGGL…YIYL), and 109-129 (ESFF…QAIG). Arg130 is an a 1,2-diacyl-sn-glycero-3-phospho-(1'-sn-glycerol) binding site. The next 3 membrane-spanning stretches (helical) occupy residues 169–189 (PTFL…VYLL), 196–216 (GIVF…IEGL), and 228–248 (VAQL…YNII).

It belongs to the Lgt family.

The protein localises to the cell membrane. The catalysed reaction is L-cysteinyl-[prolipoprotein] + a 1,2-diacyl-sn-glycero-3-phospho-(1'-sn-glycerol) = an S-1,2-diacyl-sn-glyceryl-L-cysteinyl-[prolipoprotein] + sn-glycerol 1-phosphate + H(+). It functions in the pathway protein modification; lipoprotein biosynthesis (diacylglyceryl transfer). Its function is as follows. Catalyzes the transfer of the diacylglyceryl group from phosphatidylglycerol to the sulfhydryl group of the N-terminal cysteine of a prolipoprotein, the first step in the formation of mature lipoproteins. This is Phosphatidylglycerol--prolipoprotein diacylglyceryl transferase from Clostridium botulinum (strain Langeland / NCTC 10281 / Type F).